The sequence spans 265 residues: Probable autolysin SsaALP (265 aa).

A signal peptide spans 1-25 (MKKLAFAITATSGAAAFLTHHDAQA). LysM domains follow at residues 27–70 (TQHT…VISV) and 89–132 (SSHT…TLQI). Positions 72–92 (GSDAQNTSNTSPQAGSASSHT) are disordered. The span at 74 to 92 (DAQNTSNTSPQAGSASSHT) shows a compositional bias: polar residues. A Peptidase C51 domain is found at 141–265 (TPTATTGSNG…SEVSSYAFIH (125 aa)).

It carries out the reaction Hydrolyzes the link between N-acetylmuramoyl residues and L-amino acid residues in certain cell-wall glycopeptides.. Functionally, has weak lytic activity toward S.aureus cells. This Staphylococcus aureus (strain NCTC 8325 / PS 47) protein is Probable autolysin SsaALP.